Reading from the N-terminus, the 267-residue chain is MKRALALMGLAFLCVLRAGAAQQTVDDACSVQILVPGLKGDAGEKGDKGAPGRPGRVGPTGEKGDVGDKGQKGGVGRHGKIGPIGSKGEKGDSGDIGPPGPNGEPGIPCECSQLRKAIGEMDNQVTQLTAELKFIKNAVAGVRETEQKMYLLVKEEKRYLDAQLACQGRGGTLSMPKDEAANALLAAYITQAGLARVFIGINDLEREGAFVYADRSPMQTFSKWRSGEPNNAYDEEDCVELVASGGWNDVACHLTMHFLCEFDKEHV.

Positions 1–21 (MKRALALMGLAFLCVLRAGAA) are cleaved as a signal peptide. The disordered stretch occupies residues 40–109 (GDAGEKGDKG…GPNGEPGIPC (70 aa)). Basic and acidic residues-rich tracts occupy residues 41-50 (DAGEKGDKGA) and 62-71 (EKGDVGDKGQ). The 60-residue stretch at 49–108 (GAPGRPGRVGPTGEKGDVGDKGQKGGVGRHGKIGPIGSKGEKGDSGDIGPPGPNGEPGIP) folds into the Collagen-like domain. Positions 110 to 144 (ECSQLRKAIGEMDNQVTQLTAELKFIKNAVAGVRE) form a coiled coil. The 117-residue stretch at 145 to 261 (TEQKMYLLVK…CHLTMHFLCE (117 aa)) folds into the C-type lectin domain. 2 disulfides stabilise this stretch: cysteine 166–cysteine 260 and cysteine 238–cysteine 252. An a carbohydrate-binding site is contributed by arginine 196. Ca(2+) is bound by residues aspartate 203, glutamate 207, glutamate 228, asparagine 230, asparagine 231, aspartate 234, glutamate 236, and aspartate 237. Glutamate 236 lines the a carbohydrate pocket. A carbohydrate contacts are provided by residues glutamate 240 and 248-250 (NDV). Positions 248 and 249 each coordinate Ca(2+).

Belongs to the COLEC10/COLEC11 family. In terms of assembly, homotrimer; disulfide-linked. Interacts with MASP1; probably triggers the lectin pathway of complement.

Its subcellular location is the secreted. Lectin that plays a role in innate immunity, apoptosis and embryogenesis. Calcium-dependent lectin that binds self and non-self glycoproteins presenting high mannose oligosaccharides with at least one terminal alpha-1,2-linked mannose epitope. Primarily recognizes the terminal disaccharide of the glycan. Also recognizes a subset of fucosylated glycans and lipopolysaccharides. Plays a role in innate immunity through its ability to bind non-self sugars presented by microorganisms and to activate the complement through the recruitment of MAPS1. Also plays a role in apoptosis through its ability to bind in a calcium-independent manner the DNA present at the surface of apoptotic cells and to activate the complement in response to this binding. Finally, plays a role in development, probably serving as a guidance cue during the migration of neural crest cells and other cell types during embryogenesis. This chain is Collectin-11 (COLEC11), found in Bos taurus (Bovine).